The sequence spans 108 residues: Immunoglobulin kappa variable 11-125 (108 aa).

The interval 1–23 (DVQMIQSPSSLSASLGDIVTMTC) is framework-1. C23 and C88 are disulfide-bonded. Residues 24-34 (QASQGTSINLN) are complementarity-determining-1. A framework-2 region spans residues 35–49 (WFQQKPGKAPKLLIY). The complementarity-determining-2 stretch occupies residues 50–56 (GASILED). Residues 57 to 88 (GVPSRFSGSRYGTDFTLTISSLEDEDMATYFC) form a framework-3 region. A complementarity-determining-3 region spans residues 89–97 (LQHSYLPYT). The segment at 98-108 (FGGGTKLEIKR) is framework-4.

The sequence is that of Immunoglobulin kappa variable 11-125 from Mus musculus (Mouse).